We begin with the raw amino-acid sequence, 150 residues long: Ribonuclease H (150 aa).

One can recognise an RNase H type-1 domain in the interval 1–141 (MRPVIIHTDG…ADQLARDGLT (141 aa)). Positions 9, 47, 69, and 133 each coordinate Mg(2+).

It belongs to the RNase H family. Monomer. Requires Mg(2+) as cofactor.

Its subcellular location is the cytoplasm. The catalysed reaction is Endonucleolytic cleavage to 5'-phosphomonoester.. Its function is as follows. Endonuclease that specifically degrades the RNA of RNA-DNA hybrids. The protein is Ribonuclease H of Rhodopseudomonas palustris (strain BisB5).